The chain runs to 365 residues: MSAPATSPSAPTRPLLAIETSCDDTACAILAWDGTILAEGVLSQTDHAILGGVVPEIAARAHLDALPALVAEVLKKASLTLADIDTFAGTTGPGLIGGLIVGSSYAKGLAMALHRPFVAVNHIEAHILTPRLPSLGADLHFPYLTMLVSGGHCQCVSVEETGRYVRLGGTIDDAAGEAFDKVAKMLGLSWPGGPALEKLATEGRDDAYPLPRPLKGREGCDFSFSGLKTAVSRLIDTQDPTGSRDALPRQFAADVAASFQRAVADVMADRAEHALALSPNATALVVAGGVAANKTLRHALEQVAANHGIPFFAPPLRLCTDNAVMVAWAALERLHAGETPNEIDTAARPRWPLSERTPATPEHVS.

2 residues coordinate Fe cation: His-122 and His-126. Residues 147 to 151 (LVSGG), Asp-180, Gly-193, and Asn-293 each bind substrate. Residue Asp-321 participates in Fe cation binding. The tract at residues 340–365 (PNEIDTAARPRWPLSERTPATPEHVS) is disordered.

Belongs to the KAE1 / TsaD family. It depends on Fe(2+) as a cofactor.

It localises to the cytoplasm. The catalysed reaction is L-threonylcarbamoyladenylate + adenosine(37) in tRNA = N(6)-L-threonylcarbamoyladenosine(37) in tRNA + AMP + H(+). Required for the formation of a threonylcarbamoyl group on adenosine at position 37 (t(6)A37) in tRNAs that read codons beginning with adenine. Is involved in the transfer of the threonylcarbamoyl moiety of threonylcarbamoyl-AMP (TC-AMP) to the N6 group of A37, together with TsaE and TsaB. TsaD likely plays a direct catalytic role in this reaction. This Gluconobacter oxydans (strain 621H) (Gluconobacter suboxydans) protein is tRNA N6-adenosine threonylcarbamoyltransferase.